The sequence spans 164 residues: Protein SprT (164 aa).

The SprT-like domain occupies 14–156 (QQAETFFKRP…LCKRCRAILV (143 aa)). Residue histidine 69 participates in Zn(2+) binding. Residue glutamate 70 is part of the active site. Residue histidine 73 coordinates Zn(2+).

It belongs to the SprT family. It depends on Zn(2+) as a cofactor.

Its subcellular location is the cytoplasm. The protein is Protein SprT of Pseudomonas putida (strain GB-1).